The sequence spans 321 residues: MFDFRPFYQQIATSTLSAWLETLPLQLKQWEKQTHGDYIKWSKIIDFLPHLTADHIDLKSAVKAETKTPLSSGERQRIIHHLKQLMPWRKGPYHLYGIHIDCEWRSDFKWERVLPHLAPLQNRLVLDVGCGSGYHMWRMVGEGAKMVVGIDPTELFLCQFEAVRKLLNNDRRANLIPLGIEEMQPLAAFDTVFSMGVLYHRKSPLDHLTQLKNQLVKDGELVLETLVVEGDINTTLVPTDRYAKMKNVYFIPSVLALINWLEKCGFHNIRCVDVETTGLEEQRKTDWLENESLIDFLNPQDHSKTIEGYPAPKRAVILANK.

Residues Lys90, Trp104, Lys109, Gly129, 151–153 (DPT), 180–181 (IE), Met195, Tyr199, and Arg314 contribute to the carboxy-S-adenosyl-L-methionine site.

The protein belongs to the class I-like SAM-binding methyltransferase superfamily. CmoB family. In terms of assembly, homotetramer.

The catalysed reaction is carboxy-S-adenosyl-L-methionine + 5-hydroxyuridine(34) in tRNA = 5-carboxymethoxyuridine(34) in tRNA + S-adenosyl-L-homocysteine + H(+). Functionally, catalyzes carboxymethyl transfer from carboxy-S-adenosyl-L-methionine (Cx-SAM) to 5-hydroxyuridine (ho5U) to form 5-carboxymethoxyuridine (cmo5U) at position 34 in tRNAs. The protein is tRNA U34 carboxymethyltransferase of Histophilus somni (strain 129Pt) (Haemophilus somnus).